We begin with the raw amino-acid sequence, 485 residues long: Aspartyl/glutamyl-tRNA(Asn/Gln) amidotransferase subunit B (485 aa).

This sequence belongs to the GatB/GatE family. GatB subfamily. As to quaternary structure, heterotrimer of A, B and C subunits.

The catalysed reaction is L-glutamyl-tRNA(Gln) + L-glutamine + ATP + H2O = L-glutaminyl-tRNA(Gln) + L-glutamate + ADP + phosphate + H(+). The enzyme catalyses L-aspartyl-tRNA(Asn) + L-glutamine + ATP + H2O = L-asparaginyl-tRNA(Asn) + L-glutamate + ADP + phosphate + 2 H(+). Its function is as follows. Allows the formation of correctly charged Asn-tRNA(Asn) or Gln-tRNA(Gln) through the transamidation of misacylated Asp-tRNA(Asn) or Glu-tRNA(Gln) in organisms which lack either or both of asparaginyl-tRNA or glutaminyl-tRNA synthetases. The reaction takes place in the presence of glutamine and ATP through an activated phospho-Asp-tRNA(Asn) or phospho-Glu-tRNA(Gln). The sequence is that of Aspartyl/glutamyl-tRNA(Asn/Gln) amidotransferase subunit B from Borrelia duttonii (strain Ly).